We begin with the raw amino-acid sequence, 526 residues long: MSFLQEVGKRRTFAIISHPDAGKTTITEKVLLFGNAIQKAGTVKGRGSNQHAKSDWMEMEKERGISVTTSVMQFPFNGCLVNLLDTPGHEDFSEDTYRTLTAVDSCLMVIDAAKGVEDRTRKLMEVTRLRDTPIVTFMNKMDREVRDPMEVLDEVESELGMACAPISWPIGCGKEFKGVYHIHRDETILYQSGHGHEIQEVRTIKGLDNPELDVAIGNELALSVREELELVIGAAHEFDLELFLKGELTPVYFGTALGNFGVDHMLEGLTEWAPAPQTREATERPVEATEEKFSGFVFKIQANMDPKHRDRIAFMRIVSGTYTQGMKMNHVRTGKNISISDAVTFMAGDRARAEVAYAGDIIGLHNHGTIQIGDTFTQGENLKFSGIPNFAPELFRRIRLRDPLKQKQLLKGLVQLSEEGAVQVFRPLQNNDLIVGAVGVLQFDVVVSRLKSEYNVEAIYEGISVATARWVECSDGKMQDEFQRKNQTNLALDGGNNLTYIAPTMVNLNLAIERFPDVQFRATREH.

In terms of domain architecture, tr-type G spans 8–277; the sequence is GKRRTFAIIS…GLTEWAPAPQ (270 aa). Residues 17-24, 85-89, and 139-142 each bind GTP; these read SHPDAGKT, DTPGH, and NKMD.

This sequence belongs to the TRAFAC class translation factor GTPase superfamily. Classic translation factor GTPase family. PrfC subfamily.

The protein resides in the cytoplasm. Increases the formation of ribosomal termination complexes and stimulates activities of RF-1 and RF-2. It binds guanine nucleotides and has strong preference for UGA stop codons. It may interact directly with the ribosome. The stimulation of RF-1 and RF-2 is significantly reduced by GTP and GDP, but not by GMP. This is Peptide chain release factor 3 from Aliivibrio salmonicida (strain LFI1238) (Vibrio salmonicida (strain LFI1238)).